We begin with the raw amino-acid sequence, 109 residues long: Nucleoid-associated protein ECA1177 (109 aa).

The protein belongs to the YbaB/EbfC family. As to quaternary structure, homodimer.

The protein localises to the cytoplasm. The protein resides in the nucleoid. Functionally, binds to DNA and alters its conformation. May be involved in regulation of gene expression, nucleoid organization and DNA protection. The chain is Nucleoid-associated protein ECA1177 from Pectobacterium atrosepticum (strain SCRI 1043 / ATCC BAA-672) (Erwinia carotovora subsp. atroseptica).